The following is a 459-amino-acid chain: Anthocyanidin 3-O-glucoside 2''-O-glucosyltransferase (459 aa).

His20 (proton acceptor) is an active-site residue. His20 is a binding site for an anthocyanidin. The Charge relay role is filled by Asp117. UDP-alpha-D-glucose contacts are provided by Thr138, Val335, Gln337, His352, Trp355, Ser357, and Glu360. Gly375 serves as a coordination point for an anthocyanidin. The UDP-alpha-D-glucose site is built by Asp376 and Gln377.

This sequence belongs to the UDP-glycosyltransferase family. Mainly expressed in the petals and tubes of flower buds at around 24 hours before flower opening.

The catalysed reaction is an anthocyanidin 3-O-beta-D-glucoside + UDP-alpha-D-glucose = an anthocyanidin 3-O-sophoroside + UDP + 2 H(+). The protein operates within pigment biosynthesis; anthocyanin biosynthesis. Its function is as follows. Glycosyltransferase that mediates the glucosylation of anthocyanidin 3-O-glucosides to yield anthocyanidin 3-O-sophorosides. 3-O-sophoroside derivatives are required for the bright blue or red color of flowers. This chain is Anthocyanidin 3-O-glucoside 2''-O-glucosyltransferase (3GGT), found in Ipomoea nil (Japanese morning glory).